The sequence spans 192 residues: 7-methyl-GTP pyrophosphatase (192 aa).

The active-site Proton acceptor is Asp69.

It belongs to the Maf family. YceF subfamily. A divalent metal cation serves as cofactor.

The protein localises to the cytoplasm. The catalysed reaction is N(7)-methyl-GTP + H2O = N(7)-methyl-GMP + diphosphate + H(+). Functionally, nucleoside triphosphate pyrophosphatase that hydrolyzes 7-methyl-GTP (m(7)GTP). May have a dual role in cell division arrest and in preventing the incorporation of modified nucleotides into cellular nucleic acids. The protein is 7-methyl-GTP pyrophosphatase (maf-2) of Pseudomonas putida (strain ATCC 47054 / DSM 6125 / CFBP 8728 / NCIMB 11950 / KT2440).